Consider the following 225-residue polypeptide: 3-dehydroquinate dehydratase (225 aa).

3-dehydroquinate contacts are provided by residues Ser6, 30–32 (EWR), and Arg62. The active-site Proton donor/acceptor is the His118. The active-site Schiff-base intermediate with substrate is Lys143. The 3-dehydroquinate site is built by Arg186, Ser205, and Gln209.

The protein belongs to the type-I 3-dehydroquinase family. In terms of assembly, homodimer.

The catalysed reaction is 3-dehydroquinate = 3-dehydroshikimate + H2O. The protein operates within metabolic intermediate biosynthesis; chorismate biosynthesis; chorismate from D-erythrose 4-phosphate and phosphoenolpyruvate: step 3/7. Its function is as follows. Involved in the third step of the chorismate pathway, which leads to the biosynthesis of aromatic amino acids. Catalyzes the cis-dehydration of 3-dehydroquinate (DHQ) and introduces the first double bond of the aromatic ring to yield 3-dehydroshikimate. The polypeptide is 3-dehydroquinate dehydratase (Streptococcus pneumoniae (strain Taiwan19F-14)).